Reading from the N-terminus, the 126-residue chain is UPF0344 protein ABC2900 (126 aa).

A run of 4 helical transmembrane segments spans residues Ala-16–Phe-36, Ala-43–Ala-63, Leu-66–Ile-86, and Gly-104–Ile-124.

The protein belongs to the UPF0344 family.

Its subcellular location is the cell membrane. The protein is UPF0344 protein ABC2900 of Shouchella clausii (strain KSM-K16) (Alkalihalobacillus clausii).